We begin with the raw amino-acid sequence, 105 residues long: Met repressor (105 aa).

It belongs to the MetJ family. Homodimer.

Its subcellular location is the cytoplasm. In terms of biological role, this regulatory protein, when combined with SAM (S-adenosylmethionine) represses the expression of the methionine regulon and of enzymes involved in SAM synthesis. The polypeptide is Met repressor (Pectobacterium carotovorum subsp. carotovorum (strain PC1)).